We begin with the raw amino-acid sequence, 114 residues long: Photosystem II reaction center Psb28 protein (114 aa).

The protein belongs to the Psb28 family. Part of the photosystem II complex.

The protein resides in the cellular thylakoid membrane. The polypeptide is Photosystem II reaction center Psb28 protein (Rippkaea orientalis (strain PCC 8801 / RF-1) (Cyanothece sp. (strain PCC 8801))).